Here is a 371-residue protein sequence, read N- to C-terminus: D-erythrose-4-phosphate dehydrogenase (371 aa).

12 to 13 (RI) is a binding site for NAD(+). Residues 154–156 (SCT), R200, 213–214 (TK), and R236 contribute to the substrate site. Catalysis depends on C155, which acts as the Nucleophile. N318 serves as a coordination point for NAD(+).

This sequence belongs to the glyceraldehyde-3-phosphate dehydrogenase family. Epd subfamily. Homotetramer.

Its subcellular location is the cytoplasm. The enzyme catalyses D-erythrose 4-phosphate + NAD(+) + H2O = 4-phospho-D-erythronate + NADH + 2 H(+). It participates in cofactor biosynthesis; pyridoxine 5'-phosphate biosynthesis; pyridoxine 5'-phosphate from D-erythrose 4-phosphate: step 1/5. Functionally, catalyzes the NAD-dependent conversion of D-erythrose 4-phosphate to 4-phosphoerythronate. This Psychromonas ingrahamii (strain DSM 17664 / CCUG 51855 / 37) protein is D-erythrose-4-phosphate dehydrogenase.